A 319-amino-acid chain; its full sequence is Protease HtpX homolog (319 aa).

A run of 2 helical transmembrane segments spans residues 6 to 26 (TAMLLAFMTVLFMAVGYVIGG) and 28 to 48 (GGMMIALVIAAGMNFFSYWNS). A Zn(2+)-binding site is contributed by H130. E131 is an active-site residue. Residue H134 coordinates Zn(2+). The next 2 helical transmembrane spans lie at 145–165 (LTATLAGAISMLGNFAFFFGG) and 172–192 (PLGFIGVLIAMIVAPLAAMLV). E201 contributes to the Zn(2+) binding site. The interval 277-319 (MARETSTGSTAPVRPDNAGRKSRSVPRTGWGRGGSEPPKGPWS) is disordered.

It belongs to the peptidase M48B family. Zn(2+) is required as a cofactor.

The protein localises to the cell inner membrane. The protein is Protease HtpX homolog of Rhizobium meliloti (strain 1021) (Ensifer meliloti).